The following is a 441-amino-acid chain: Trigger factor (441 aa).

The region spanning 163–248 (GDQVVFDFVG…IKEVKKPVPA (86 aa)) is the PPIase FKBP-type domain.

Belongs to the FKBP-type PPIase family. Tig subfamily.

The protein localises to the cytoplasm. It carries out the reaction [protein]-peptidylproline (omega=180) = [protein]-peptidylproline (omega=0). Its function is as follows. Involved in protein export. Acts as a chaperone by maintaining the newly synthesized protein in an open conformation. Functions as a peptidyl-prolyl cis-trans isomerase. This chain is Trigger factor, found in Jannaschia sp. (strain CCS1).